Consider the following 379-residue polypeptide: Cobalt-precorrin-5B C(1)-methyltransferase (379 aa).

It belongs to the CbiD family.

It carries out the reaction Co-precorrin-5B + S-adenosyl-L-methionine = Co-precorrin-6A + S-adenosyl-L-homocysteine. Its pathway is cofactor biosynthesis; adenosylcobalamin biosynthesis; cob(II)yrinate a,c-diamide from sirohydrochlorin (anaerobic route): step 6/10. In terms of biological role, catalyzes the methylation of C-1 in cobalt-precorrin-5B to form cobalt-precorrin-6A. This chain is Cobalt-precorrin-5B C(1)-methyltransferase, found in Salmonella heidelberg (strain SL476).